A 205-amino-acid polypeptide reads, in one-letter code: Nascent polypeptide-associated complex subunit alpha-like protein (205 aa).

2 disordered regions span residues 1–73 and 137–166; these read MPSV…RKAM and KAPNLSHVTMKPESSTAAQEDEDEVDDTGV. The segment covering 20 to 29 has biased composition (basic and acidic residues); that stretch reads EQQELEHSDE. The span at 30–51 shows a compositional bias: acidic residues; that stretch reads PILEDDEDDDDEEDDNDEDDAQ. Positions 56–66 are enriched in basic and acidic residues; it reads GEGKSKQSRSE. Residues 63 to 128 enclose the NAC-A/B domain; sequence SRSEKKCRKA…AKIEDLSSQL (66 aa). The span at 155-165 shows a compositional bias: acidic residues; the sequence is QEDEDEVDDTG. Residues 166-203 enclose the UBA domain; that stretch reads VEPKDIELVMTQAGVSRTKAVKALKAADGDIVSAIMDL.

This sequence belongs to the NAC-alpha family.

May promote appropriate targeting of ribosome-nascent polypeptide complexes. The polypeptide is Nascent polypeptide-associated complex subunit alpha-like protein (Pinus taeda (Loblolly pine)).